A 305-amino-acid polypeptide reads, in one-letter code: Beta-lactamase ROB-1 (305 aa).

The signal sequence occupies residues 1–33 (MLNKLKIGTLLLLTLTACSPNSVHSVTSNPQPA). Residue serine 86 is the Acyl-ester intermediate of the active site. 248-250 (KSG) is a binding site for substrate.

Belongs to the class-A beta-lactamase family.

It carries out the reaction a beta-lactam + H2O = a substituted beta-amino acid. The polypeptide is Beta-lactamase ROB-1 (rob1) (Actinobacillus pleuropneumoniae (Haemophilus pleuropneumoniae)).